The primary structure comprises 140 residues: Smith-Magenis syndrome chromosomal region candidate gene 5 protein (140 aa).

The segment at C43–S77 is disordered. A compositionally biased stretch (pro residues) spans Q49–S58.

As to expression, widely expressed.

In Homo sapiens (Human), this protein is Smith-Magenis syndrome chromosomal region candidate gene 5 protein (SMCR5).